A 309-amino-acid polypeptide reads, in one-letter code: 5-formyl-3-hydroxy-2-methylpyridine 4-carboxylate 5-dehydrogenase (309 aa).

Residues 12 to 13, Asp32, 87 to 89, and Lys94 each bind NAD(+); these read TM and VPE.

This sequence belongs to the 3-hydroxyacyl-CoA dehydrogenase family. Homodimer.

The catalysed reaction is 5-formyl-3-hydroxy-2-methylpyridine-4-carboxylate + NAD(+) + H2O = 5-hydroxy-6-methylpyridine-3,4-dicarboxylate + NADH + 2 H(+). The enzyme catalyses 5-formyl-3-hydroxy-2-methylpyridine-4-carboxylate + NADH + H(+) = 4-pyridoxate + NAD(+). It functions in the pathway cofactor degradation; B6 vitamer degradation. Functionally, involved in the degradation of pyridoxine (vitamin B(6)). Catalyzes the oxidation of 5-formyl-3-hydroxy-2-methylpyridine-4-carboxylate (FHMPC) by NAD(+) to 5-hydroxy-6-methylpyridine-3,4-dicarboxylate (HMPDC). Can also catalyze the reduction of FHMPC by NADH to 4-pyridoxic acid. The sequence is that of 5-formyl-3-hydroxy-2-methylpyridine 4-carboxylate 5-dehydrogenase from Mesorhizobium japonicum (strain LMG 29417 / CECT 9101 / MAFF 303099) (Mesorhizobium loti (strain MAFF 303099)).